A 209-amino-acid polypeptide reads, in one-letter code: tRNA(Phe) 7-((3-amino-3-carboxypropyl)-4-demethylwyosine(37)-N(4))-methyltransferase (209 aa).

The protein belongs to the TYW3 family.

The enzyme catalyses 4-demethyl-7-[(3S)-3-amino-3-carboxypropyl]wyosine(37) in tRNA(Phe) + S-adenosyl-L-methionine = 7-[(3S)-3-amino-3-carboxypropyl]wyosine(37) in tRNA(Phe) + S-adenosyl-L-homocysteine + H(+). In terms of biological role, S-adenosyl-L-methionine-dependent methyltransferase that acts as a component of the wyosine derivatives biosynthesis pathway. Probably methylates N-4 position of wybutosine-86 to produce wybutosine-72. The polypeptide is tRNA(Phe) 7-((3-amino-3-carboxypropyl)-4-demethylwyosine(37)-N(4))-methyltransferase (Saccharolobus solfataricus (strain ATCC 35092 / DSM 1617 / JCM 11322 / P2) (Sulfolobus solfataricus)).